Here is a 161-residue protein sequence, read N- to C-terminus: Nucleotide-binding protein Pfl01_4421 (161 aa).

Belongs to the YajQ family.

Nucleotide-binding protein. This chain is Nucleotide-binding protein Pfl01_4421, found in Pseudomonas fluorescens (strain Pf0-1).